Consider the following 820-residue polypeptide: Trimethylamine-N-oxide reductase (820 aa).

The tat-type signal signal peptide spans 1–33 (MAITRRSFLKGVATTSAASIIGPSLLTSVSAQA). Ser179 is a Mo-bis(molybdopterin guanine dinucleotide) binding site.

It belongs to the prokaryotic molybdopterin-containing oxidoreductase family. Mo-bis(molybdopterin guanine dinucleotide) is required as a cofactor. In terms of processing, predicted to be exported by the Tat system. The position of the signal peptide cleavage has not been experimentally proven.

The protein localises to the periplasm. It carries out the reaction trimethylamine + 2 Fe(III)-[cytochrome c] + H2O = trimethylamine N-oxide + 2 Fe(II)-[cytochrome c] + 3 H(+). In terms of biological role, reduces trimethylamine-N-oxide (TMAO) into trimethylamine; an anaerobic reaction coupled to energy-yielding reactions. The protein is Trimethylamine-N-oxide reductase (torA) of Vibrio cholerae serotype O1 (strain ATCC 39315 / El Tor Inaba N16961).